We begin with the raw amino-acid sequence, 79 residues long: Conotoxin ArMSGL-0124 (79 aa).

The signal sequence occupies residues 1–20 (MSRLGIMVLTLLLLVYMATS). Positions 21–44 (HQDAGEKQATQRDAINFRWKRSLT) are excised as a propeptide. Disulfide bonds link Cys52–Cys64, Cys56–Cys73, and Cys63–Cys77. Leu78 carries the leucine amide modification.

It belongs to the conotoxin O3 superfamily. In terms of tissue distribution, expressed by the venom duct.

It is found in the secreted. The sequence is that of Conotoxin ArMSGL-0124 from Conus arenatus (Sand-dusted cone).